A 388-amino-acid polypeptide reads, in one-letter code: Homoserine O-acetyltransferase (388 aa).

The region spanning 55–354 (PIVLIEHALT…PTGHDGFLIE (300 aa)) is the AB hydrolase-1 domain. Residue S150 is the Nucleophile of the active site. R220 is a binding site for substrate. Catalysis depends on residues D318 and H348. Residue D349 participates in substrate binding.

This sequence belongs to the AB hydrolase superfamily. MetX family. In terms of assembly, homodimer.

The protein localises to the cytoplasm. It carries out the reaction L-homoserine + acetyl-CoA = O-acetyl-L-homoserine + CoA. It functions in the pathway amino-acid biosynthesis; L-methionine biosynthesis via de novo pathway; O-acetyl-L-homoserine from L-homoserine: step 1/1. In terms of biological role, transfers an acetyl group from acetyl-CoA to L-homoserine, forming acetyl-L-homoserine. This Corynebacterium urealyticum (strain ATCC 43042 / DSM 7109) protein is Homoserine O-acetyltransferase.